A 91-amino-acid polypeptide reads, in one-letter code: Small ribosomal subunit protein bS20 (91 aa).

Residues 1–21 are compositionally biased toward basic and acidic residues; the sequence is MPLHKSAEKRLRQAARRNERN. The segment at 1–24 is disordered; sequence MPLHKSAEKRLRQAARRNERNRAR.

The protein belongs to the bacterial ribosomal protein bS20 family.

Binds directly to 16S ribosomal RNA. The polypeptide is Small ribosomal subunit protein bS20 (Chlorobaculum parvum (strain DSM 263 / NCIMB 8327) (Chlorobium vibrioforme subsp. thiosulfatophilum)).